The following is a 165-amino-acid chain: Nucleotide-binding protein A9601_05361 (165 aa).

The protein belongs to the YajQ family.

Its function is as follows. Nucleotide-binding protein. The polypeptide is Nucleotide-binding protein A9601_05361 (Prochlorococcus marinus (strain AS9601)).